The following is a 436-amino-acid chain: Adenylosuccinate synthetase (436 aa).

Residues 13–19 (GDEGKGK) and 41–43 (GHT) contribute to the GTP site. Aspartate 14 functions as the Proton acceptor in the catalytic mechanism. Mg(2+) is bound by residues aspartate 14 and glycine 41. IMP is bound by residues 14–17 (DEGK), 39–42 (NAGH), threonine 131, arginine 145, glutamine 226, threonine 241, and arginine 309. The active-site Proton donor is histidine 42. 305–311 (TVTGRKR) contacts substrate. Residues arginine 311, 337–339 (KLD), and 419–421 (STG) contribute to the GTP site.

This sequence belongs to the adenylosuccinate synthetase family. Homodimer. Mg(2+) is required as a cofactor.

It localises to the cytoplasm. The enzyme catalyses IMP + L-aspartate + GTP = N(6)-(1,2-dicarboxyethyl)-AMP + GDP + phosphate + 2 H(+). It participates in purine metabolism; AMP biosynthesis via de novo pathway; AMP from IMP: step 1/2. Its function is as follows. Plays an important role in the de novo pathway of purine nucleotide biosynthesis. Catalyzes the first committed step in the biosynthesis of AMP from IMP. This chain is Adenylosuccinate synthetase, found in Aromatoleum aromaticum (strain DSM 19018 / LMG 30748 / EbN1) (Azoarcus sp. (strain EbN1)).